The chain runs to 663 residues: Transcriptional repressor CTCFL (663 aa).

A compositionally biased stretch (basic and acidic residues) spans 24–51 (EKGLKEEEKDGVCREKDHRSPSELEAER). Disordered regions lie at residues 24-55 (EKGLKEEEKDGVCREKDHRSPSELEAERTSGA) and 221-250 (NSNVEEQEDQPTAGQADAEKAKSTKNQRKT). 10 C2H2-type zinc fingers span residues 257-279 (FHCDVCMFTSSRMSSFNRHMKTH), 285-307 (HLCHLCLKTFRTVTLLRNHVNTH), 313-336 (YKCNDCNMAFVTSGELVRHRRYKH), 342-364 (FKCSMCKYASVEASKLKRHVRSH), 370-392 (FQCCQCSYASRDTYKLKRHMRTH), 398-421 (YECHICHTRFTQSGTMKIHILQKH), 428-451 (YQCPHCATIIARKSDLRVHMRNLH), 458-480 (LKCRYCSAVFHERYALIQHQKTH), 486-508 (FKCKHCSYACKQERHMTAHIRTH), and 514-537 (FTCLSCNKCFRQKQLLNAHFRKYH). A C2H2-type 11; atypical zinc finger spans residues 546–568 (YKCSKCGKGFSRWINLHRHSEKC). Positions 569 to 630 (GSGEAKSAAS…STTKGEQFPG (62 aa)) are disordered. Over residues 580–590 (KGRRTRKRKQT) the composition is skewed to basic residues. Over residues 594–607 (EATKGQKEAAKGWK) the composition is skewed to basic and acidic residues. Residues 608-620 (EAANGDEAAAEEA) show a composition bias toward low complexity.

Belongs to the CTCF zinc-finger protein family. As to quaternary structure, interacts with histones, PRMT7 and SETD1A. Interacts (via N-terminus) with BAG6/BAT3. As to expression, testis specific. Specifically expressed in primary spermatocytes.

Its subcellular location is the cytoplasm. The protein localises to the nucleus. Testis-specific DNA binding protein responsible for insulator function, nuclear architecture and transcriptional control, which probably acts by recruiting epigenetic chromatin modifiers. Plays a key role in gene imprinting in male germline, by participating in the establishment of differential methylation at the IGF2/H19 imprinted control region (ICR). Directly binds the unmethylated H19 ICR and recruits the PRMT7 methyltransferase, leading to methylate histone H4 'Arg-3' to form H4R3sme2. This probably leads to recruit de novo DNA methyltransferases at these sites. Seems to act as tumor suppressor. In association with DNMT1 and DNMT3B, involved in activation of BAG1 gene expression by binding to its promoter. Required for dimethylation of H3 lysine 4 (H3K4me2) of MYC and BRCA1 promoters. The sequence is that of Transcriptional repressor CTCFL (CTCFL) from Homo sapiens (Human).